Reading from the N-terminus, the 107-residue chain is uncharacterized protein (107 aa).

An N-terminal signal peptide occupies residues 1-18 (MRTLMLIILSILIYLSSA).

This is an uncharacterized protein from Caenorhabditis elegans.